The chain runs to 173 residues: Bursicon (173 aa).

Residues 1-32 (MLRHLLRHENNKVFVLILLYCVLVSILKLCTA) form the signal peptide. Disulfide bonds link cysteine 52/cysteine 101, cysteine 66/cysteine 115, cysteine 76/cysteine 136, cysteine 80/cysteine 138, and cysteine 98/cysteine 141. The region spanning 52 to 142 (CQVTPVIHVL…PLECMCRPCT (91 aa)) is the CTCK domain.

Heterodimer of Burs and Pburs. As to expression, expressed in one to two pairs of neurons in each of the thoracic and abdominal neuromeres of the larval CNS. Coexpressed with CCAP in most CCAP-specific neurons. Coexpressed with Pburs in four bilateral neurons in thoracic and abdominal neuromeres of the ventral nervous system.

It is found in the secreted. Final heterodimeric neurohormone released at the end of the molting cycle, involved in the sclerotization (tanning) of the insect cuticle, melanization and wing spreading. Heterodimer specifically activates the G protein-coupled receptor rk. The sequence is that of Bursicon from Drosophila melanogaster (Fruit fly).